A 99-amino-acid chain; its full sequence is uncharacterized protein (99 aa).

The protein resides in the mitochondrion. This is an uncharacterized protein from Marchantia polymorpha (Common liverwort).